Consider the following 179-residue polypeptide: NAD(P)H-quinone oxidoreductase subunit I, chloroplastic (179 aa).

4Fe-4S ferredoxin-type domains lie at 55–84 (GRIH…VDWR) and 95–124 (LNYS…MTEE). 8 residues coordinate [4Fe-4S] cluster: Cys64, Cys67, Cys70, Cys74, Cys104, Cys107, Cys110, and Cys114.

The protein belongs to the complex I 23 kDa subunit family. As to quaternary structure, NDH is composed of at least 16 different subunits, 5 of which are encoded in the nucleus. [4Fe-4S] cluster serves as cofactor.

Its subcellular location is the plastid. The protein resides in the chloroplast thylakoid membrane. It carries out the reaction a plastoquinone + NADH + (n+1) H(+)(in) = a plastoquinol + NAD(+) + n H(+)(out). The catalysed reaction is a plastoquinone + NADPH + (n+1) H(+)(in) = a plastoquinol + NADP(+) + n H(+)(out). NDH shuttles electrons from NAD(P)H:plastoquinone, via FMN and iron-sulfur (Fe-S) centers, to quinones in the photosynthetic chain and possibly in a chloroplast respiratory chain. The immediate electron acceptor for the enzyme in this species is believed to be plastoquinone. Couples the redox reaction to proton translocation, and thus conserves the redox energy in a proton gradient. The polypeptide is NAD(P)H-quinone oxidoreductase subunit I, chloroplastic (Nuphar advena (Common spatterdock)).